The following is a 503-amino-acid chain: Inosine-5'-monophosphate dehydrogenase (503 aa).

Residues G20 and S22 each contribute to the K(+) site. CBS domains are found at residues 103–163 and 167–228; these read FVVS…ETKV and MTPF…LVDS. 261–263 is an NAD(+) binding site; the sequence is DSS. K(+) is bound by residues D264, F266, G314, and G316. 312-314 serves as a coordination point for NAD(+); it reads GIG. An IMP-binding site is contributed by S317. C319 serves as a coordination point for K(+). The active-site Thioimidate intermediate is C319. IMP-binding positions include 358 to 360, 381 to 382, and 405 to 409; these read DGG, GR, and YWGEG. The active-site Proton acceptor is the R418. E431 is a binding site for IMP. N460, E485, G486, and G487 together coordinate K(+).

Belongs to the IMPDH/GMPR family. Homotetramer. The cofactor is K(+).

It is found in the cytoplasm. The enzyme catalyses IMP + NAD(+) + H2O = XMP + NADH + H(+). It functions in the pathway purine metabolism; XMP biosynthesis via de novo pathway; XMP from IMP: step 1/1. Mycophenolic acid (MPA) is a non-competitive inhibitor that prevents formation of the closed enzyme conformation by binding to the same site as the amobile flap. In contrast, mizoribine monophosphate (MZP) is a competitive inhibitor that induces the closed conformation. MPA is a potent inhibitor of mammalian IMPDHs but a poor inhibitor of the bacterial enzymes. MZP is a more potent inhibitor of bacterial IMPDH. In terms of biological role, catalyzes the conversion of inosine 5'-phosphate (IMP) to xanthosine 5'-phosphate (XMP), the first committed and rate-limiting step in the de novo synthesis of guanine nucleotides, and therefore plays an important role in the regulation of cell growth. Could also have a single-stranded nucleic acid-binding activity and could play a role in RNA and/or DNA metabolism. The sequence is that of Inosine-5'-monophosphate dehydrogenase from Tritrichomonas foetus (Trichomonas foetus).